A 488-amino-acid chain; its full sequence is Ribulose bisphosphate carboxylase large chain (488 aa).

Substrate contacts are provided by N127 and T177. The active-site Proton acceptor is K179. Residue K181 coordinates substrate. Residues K205, D207, and E208 each coordinate Mg(2+). K205 carries the post-translational modification N6-carboxylysine. The active-site Proton acceptor is the H297. Substrate is bound by residues R298, H330, and S382.

The protein belongs to the RuBisCO large chain family. Type I subfamily. In terms of assembly, heterohexadecamer of 8 large chains and 8 small chains. It depends on Mg(2+) as a cofactor.

It is found in the plastid. The protein resides in the chloroplast. The enzyme catalyses 2 (2R)-3-phosphoglycerate + 2 H(+) = D-ribulose 1,5-bisphosphate + CO2 + H2O. It catalyses the reaction D-ribulose 1,5-bisphosphate + O2 = 2-phosphoglycolate + (2R)-3-phosphoglycerate + 2 H(+). Its function is as follows. RuBisCO catalyzes two reactions: the carboxylation of D-ribulose 1,5-bisphosphate, the primary event in carbon dioxide fixation, as well as the oxidative fragmentation of the pentose substrate in the photorespiration process. Both reactions occur simultaneously and in competition at the same active site. The chain is Ribulose bisphosphate carboxylase large chain from Pyropia yezoensis (Susabi-nori).